The following is a 182-amino-acid chain: uncharacterized protein (182 aa).

This is an uncharacterized protein from Haemophilus influenzae (strain ATCC 51907 / DSM 11121 / KW20 / Rd).